The sequence spans 95 residues: Small integral membrane protein 18 (95 aa).

The helical transmembrane segment at 35-55 threads the bilayer; that stretch reads CFVILLLFIFTVVSLVVLAFL.

The protein localises to the membrane. The chain is Small integral membrane protein 18 (SMIM18) from Homo sapiens (Human).